Reading from the N-terminus, the 111-residue chain is Phosphoribosyl-ATP pyrophosphatase (111 aa).

The protein belongs to the PRA-PH family.

The protein resides in the cytoplasm. The catalysed reaction is 1-(5-phospho-beta-D-ribosyl)-ATP + H2O = 1-(5-phospho-beta-D-ribosyl)-5'-AMP + diphosphate + H(+). It participates in amino-acid biosynthesis; L-histidine biosynthesis; L-histidine from 5-phospho-alpha-D-ribose 1-diphosphate: step 2/9. The chain is Phosphoribosyl-ATP pyrophosphatase from Azotobacter vinelandii (strain DJ / ATCC BAA-1303).